The primary structure comprises 50 residues: Photosystem II reaction center protein M (50 aa).

The chain crosses the membrane as a helical span at residues 7 to 27 (GFIASLLFVGVPTIFLIGLFI).

This sequence belongs to the PsbM family. In terms of assembly, PSII is composed of 1 copy each of membrane proteins PsbA, PsbB, PsbC, PsbD, PsbE, PsbF, PsbH, PsbI, PsbJ, PsbK, PsbL, PsbM, PsbT, PsbX, PsbY, Psb30/Ycf12, peripheral proteins PsbO, CyanoQ (PsbQ), PsbU, PsbV and a large number of cofactors. It forms dimeric complexes.

The protein localises to the cellular thylakoid membrane. Functionally, one of the components of the core complex of photosystem II (PSII). PSII is a light-driven water:plastoquinone oxidoreductase that uses light energy to abstract electrons from H(2)O, generating O(2) and a proton gradient subsequently used for ATP formation. It consists of a core antenna complex that captures photons, and an electron transfer chain that converts photonic excitation into a charge separation. This subunit is found at the monomer-monomer interface. The polypeptide is Photosystem II reaction center protein M (Prochlorococcus marinus (strain MIT 9312)).